The sequence spans 193 residues: Ribonuclease HII (193 aa).

One can recognise an RNase H type-2 domain in the interval 15-193 (YIVAGVDEAG…SYHRRSFKSC (179 aa)). A divalent metal cation contacts are provided by D21, E22, and D112.

The protein belongs to the RNase HII family. It depends on Mn(2+) as a cofactor. Mg(2+) is required as a cofactor.

The protein localises to the cytoplasm. It catalyses the reaction Endonucleolytic cleavage to 5'-phosphomonoester.. Endonuclease that specifically degrades the RNA of RNA-DNA hybrids. This is Ribonuclease HII (rnhB) from Rickettsia prowazekii (strain Madrid E).